The chain runs to 166 residues: Disulfide bond formation protein B (166 aa).

Over M1–L11 the chain is Cytoplasmic. Residues F12 to Y28 traverse the membrane as a helical segment. Residues L29–Y46 lie on the Periplasmic side of the membrane. C38 and C41 are oxidised to a cystine. A helical transmembrane segment spans residues A47–P63. Residues G64–A70 lie on the Cytoplasmic side of the membrane. A helical membrane pass occupies residues Y71–L87. The Periplasmic segment spans residues R88 to N143. Residues C102 and C129 are joined by a disulfide bond. A helical transmembrane segment spans residues W144–R162. At K163–G166 the chain is on the cytoplasmic side.

It belongs to the DsbB family.

The protein resides in the cell inner membrane. In terms of biological role, required for disulfide bond formation in some periplasmic proteins. Acts by oxidizing the DsbA protein. The chain is Disulfide bond formation protein B from Aromatoleum aromaticum (strain DSM 19018 / LMG 30748 / EbN1) (Azoarcus sp. (strain EbN1)).